A 129-amino-acid chain; its full sequence is Large ribosomal subunit protein bL12 (129 aa).

It belongs to the bacterial ribosomal protein bL12 family. Homodimer. Part of the ribosomal stalk of the 50S ribosomal subunit. Forms a multimeric L10(L12)X complex, where L10 forms an elongated spine to which 2 to 4 L12 dimers bind in a sequential fashion. Binds GTP-bound translation factors.

Functionally, forms part of the ribosomal stalk which helps the ribosome interact with GTP-bound translation factors. Is thus essential for accurate translation. The sequence is that of Large ribosomal subunit protein bL12 from Pseudothermotoga lettingae (strain ATCC BAA-301 / DSM 14385 / NBRC 107922 / TMO) (Thermotoga lettingae).